The chain runs to 288 residues: MLKQRVLSAIVLIAAVLCALFLFTPFYFALALGAVAILGIWEWTQFARLKQPLIRFFVTTFLGVFIFLWLYTEGNYLDAGRVFEQHLQLLLINAVSWWGLALLLVISYPKSAKFWSKNPLLQLLFAFSTLIPFVAGVLRLRLEHYTHDPYHGLFLLLYVFILVWAADSGAYFSGRAFGKRKLAPKVSPGKSWEGVIGGLITALVLAFIFIHFSNNTLVGDRNITGFIILSVATVAISVLGDLTESMFKRESGVKDSSQLIPGHGGVLDRIDSLTAAVPFFSYFYFFVL.

7 helical membrane passes run 10–30 (IVLI…YFAL), 52–72 (PLIR…WLYT), 89–109 (LLLI…ISYP), 118–138 (NPLL…AGVL), 152–172 (GLFL…GAYF), 192–212 (WEGV…FIHF), and 223–243 (ITGF…GDLT).

It belongs to the CDS family.

Its subcellular location is the cell inner membrane. It carries out the reaction a 1,2-diacyl-sn-glycero-3-phosphate + CTP + H(+) = a CDP-1,2-diacyl-sn-glycerol + diphosphate. The protein operates within phospholipid metabolism; CDP-diacylglycerol biosynthesis; CDP-diacylglycerol from sn-glycerol 3-phosphate: step 3/3. In Haemophilus influenzae (strain ATCC 51907 / DSM 11121 / KW20 / Rd), this protein is Phosphatidate cytidylyltransferase (cdsA).